The primary structure comprises 533 residues: Probable protein kinase UbiB (533 aa).

The chain crosses the membrane as a helical span at residues 24-44 (LILELPMLPWWLRLLGATLPW). Positions 126–494 (RFEREPLASA…WKGSRHDWLG (369 aa)) constitute a Protein kinase domain. ATP is bound by residues 132–140 (LASASVAQV) and K154. The active-site Proton acceptor is D289. Residues 510 to 530 (LGQQLEAWPAWVMLAGGVFLI) traverse the membrane as a helical segment.

The protein belongs to the ABC1 family. UbiB subfamily.

The protein localises to the cell inner membrane. The protein operates within cofactor biosynthesis; ubiquinone biosynthesis [regulation]. Is probably a protein kinase regulator of UbiI activity which is involved in aerobic coenzyme Q (ubiquinone) biosynthesis. This chain is Probable protein kinase UbiB, found in Pseudomonas aeruginosa (strain LESB58).